The chain runs to 780 residues: Cullin-5 (780 aa).

Position 34 is a phosphoserine (Ser34). The residue at position 210 (Thr210) is a Phosphothreonine. The Cullin neddylation domain maps to Arg711–Asp772. Lys724 participates in a covalent cross-link: Glycyl lysine isopeptide (Lys-Gly) (interchain with G-Cter in NEDD8).

Belongs to the cullin family. Component of multiple cullin-5-RING E3 ubiquitin-protein ligase complexes (ECS complexes, also named CRL5 complexes) formed of CUL5, Elongin BC (ELOB and ELOC), RNF7/RBX2 and a variable SOCS box domain-containing protein as substrate-specific recognition component. CUL5-containing ECS complexes specifically contain RNF7/RBX2, and not RBX1, as catalytic subunit. Component of the ECS(ASB2) complex with the substrate recognition component ASB2. Component of the ECS(ASB6) complex with the substrate recognition component ASB6. Component of the ECS(ASB7) complex with the substrate recognition component ASB7. Component of the ECS(ASB9) complex with the substrate recognition component ASB9. Component of the ECS(ASB11) complex with the substrate recognition component ASB11. Component of the ECS(ASB12) complex with the substrate recognition component ASB12. Component of the ECS(LRRC41) complex with the substrate recognition component LRRC41. Component of the ECS(SOCS1) complex with the substrate recognition component SOCS1. Component of the ECS(SOCS2) complex with the substrate recognition component SOCS2. Component of the ECS(WSB1) complex with the substrate recognition subunit WSB1. Component of the ECS(SOCS3) complex with the substrate recognition component SOCS3. Component of the ECS(SOCS7) complex with the substrate recognition component SOCS7. Component of the ECS(SPSB1) complex with the substrate recognition component SPSB1. Component of the ECS(SPSB3) complex with the substrate recognition component SPSB3. Component of the ECS(SPSB2) complex with the substrate recognition component SPSB2. Component of the ECS(SPSB4) complex with the substrate recognition component SPSB4. Component of the ECS(RAB40) complex with the substrate recognition subunit RAB40A, RAB40B or RAB40C. Component of the ECS(KLHDC1) complex with the substrate recognition component KLHDC1. Component of the ECS(PCMTD1) complex with the substrate recognition subunit PCMTD1. May also form complexes containing RBX1 and ELOA or VHL; additional evidence is however required to confirm this result in vivo. Interacts (when neddylated) with ARIH2; leading to activate the E3 ligase activity of ARIH2. Interacts with ERCC6; the interaction is induced by DNA damaging agents or inhibitors of RNA polymerase II elongation. Interacts with ELOA (via the BC-box). Interacts (unneddylated form) with DCUN1D1, DCUN1D2, DCUN1D3, DCUN1D4 and DCUN1D5; these interactions promote the cullin neddylation. Post-translationally, neddylated; which enhances the ubiquitination activity of ECS complexes and prevents binding of the inhibitor CAND1. Deneddylated via its interaction with the COP9 signalosome (CSN).

Its subcellular location is the nucleus. The protein operates within protein modification; protein ubiquitination. Core component of multiple cullin-5-RING E3 ubiquitin-protein ligase complexes (ECS complexes, also named CRL5 complexes), which mediate the ubiquitination and subsequent proteasomal degradation of target proteins. Acts a scaffold protein that contributes to catalysis through positioning of the substrate and the ubiquitin-conjugating enzyme. The functional specificity of the E3 ubiquitin-protein ligase complex depends on the variable SOCS box-containing substrate recognition component. Acts as a key regulator of neuron positioning during cortex development: component of various SOCS-containing ECS complexes, such as the ECS(SOCS7) complex, that regulate reelin signaling by mediating ubiquitination and degradation of DAB1. ECS(SOCS1) seems to direct ubiquitination of JAK2. The ECS(SOCS2) complex mediates the ubiquitination and subsequent proteasomal degradation of phosphorylated EPOR and GHR. The ECS(SPSB3) complex catalyzes ubiquitination of nuclear CGAS. ECS(KLHDC1) complex is part of the DesCEND (destruction via C-end degrons) pathway and mediates ubiquitination and degradation of truncated SELENOS selenoprotein produced by failed UGA/Sec decoding, which ends with a glycine. The ECS(ASB9) complex mediates ubiquitination and degradation of CKB. As part of some ECS complex, promotes 'Lys-11'-linked ubiquitination and degradation of BTRC. As part of a multisubunit ECS complex, polyubiquitinates monoubiquitinated POLR2A. As part of the ECS(RAB40C) complex, mediates ANKRD28 ubiquitination and degradation, thereby regulating protein phosphatase 6 (PP6) complex activity and focal adhesion assembly during cell migration. As part of the ECS(RAB40A) complex, mediates RHOU 'Lys-48'-linked ubiquitination and degradation, thus inhibiting focal adhesion disassembly during cell migration. As part of the ECS(RAB40B) complex, mediates LIMA1/EPLIN and RAP2 ubiquitination, thereby regulating actin cytoskeleton dynamics and stress fiber formation during cell migration. May form a cell surface vasopressin receptor. This chain is Cullin-5, found in Rattus norvegicus (Rat).